The primary structure comprises 73 residues: Translational regulator CsrA (73 aa).

It belongs to the CsrA/RsmA family. Homodimer; the beta-strands of each monomer intercalate to form a hydrophobic core, while the alpha-helices form wings that extend away from the core.

The protein localises to the cytoplasm. Its function is as follows. A translational regulator that binds mRNA to regulate translation initiation and/or mRNA stability. Usually binds in the 5'-UTR at or near the Shine-Dalgarno sequence preventing ribosome-binding, thus repressing translation. Its main target seems to be the major flagellin gene, while its function is anatagonized by FliW. This is Translational regulator CsrA from Clostridium acetobutylicum (strain ATCC 824 / DSM 792 / JCM 1419 / IAM 19013 / LMG 5710 / NBRC 13948 / NRRL B-527 / VKM B-1787 / 2291 / W).